A 1305-amino-acid chain; its full sequence is Contactin-associated protein like 5-4 (1305 aa).

Residues 1 to 24 (MNSVRRLNSILTLVLSGLWHLGLT) form the signal peptide. Over 25 to 1237 (ATNYNCDEPL…LTDTVQSDSA (1213 aa)) the chain is Extracellular. The F5/8 type C domain occupies 30–174 (CDEPLASFLS…IGMRVEVYGC (145 aa)). Cys30 and Cys174 are disulfide-bonded. 2 Laminin G-like domains span residues 180–360 (IVGF…TFSC) and 367–544 (PITF…IDLC). N-linked (GlcNAc...) asparagine glycosylation is present at Asn282. A disulfide bridge connects residues Cys329 and Cys360. Asn496 carries N-linked (GlcNAc...) asparagine glycosylation. 3 disulfides stabilise this stretch: Cys512-Cys544, Cys550-Cys561, and Cys555-Cys570. The 38-residue stretch at 546–583 (IKDRCLPNYCEHGGHCAQNWTTFYCNCSDTGYTGATCH) folds into the EGF-like 1 domain. Residue Asn571 is glycosylated (N-linked (GlcNAc...) asparagine). A disulfide bridge links Cys572 with Cys582. Positions 584–790 (DSVYEQSCEV…LRCYGDRHFW (207 aa)) constitute a Fibrinogen C-terminal domain. The N-linked (GlcNAc...) asparagine glycan is linked to Asn622. The Laminin G-like 3 domain occupies 791-956 (NAVSFTTEAS…KLMSGVTPGC (166 aa)). Intrachain disulfides connect Cys929–Cys956, Cys960–Cys973, Cys967–Cys982, and Cys984–Cys994. The 39-residue stretch at 957 to 995 (LGHCSSYGSNCLNGGKCVEKQSGYSCDCTNSPNEGPFCQ) folds into the EGF-like 2 domain. The Laminin G-like 4 domain occupies 1014 to 1198 (EPYLVIKNTS…VQGTLTESGC (185 aa)). Asn1057 carries an N-linked (GlcNAc...) asparagine glycan. Cys1163 and Cys1198 are joined by a disulfide. Residues 1238-1258 (VIGGIIALVTFVTFCVIGIMI) form a helical membrane-spanning segment. Over 1259-1305 (HFLYLHKQSHCTNQTKEKEYSENLSNSFRNAIDLQNTASECKREYFI) the chain is Cytoplasmic.

This sequence belongs to the neurexin family.

It localises to the membrane. In terms of biological role, may play a role in the correct development and proper functioning of the peripheral and central nervous system and be involved in cell adhesion and intercellular communication. This Rattus norvegicus (Rat) protein is Contactin-associated protein like 5-4 (Cntnap5d).